The chain runs to 436 residues: tRNA-2-methylthio-N(6)-dimethylallyladenosine synthase (436 aa).

One can recognise an MTTase N-terminal domain in the interval 5 to 121 (RKLFIKTYGC…LPDMLERTEG (117 aa)). Positions 14, 50, 84, 158, 162, and 165 each coordinate [4Fe-4S] cluster. In terms of domain architecture, Radical SAM core spans 144 to 374 (ATRGPAAFLT…TEQQRAAQMA (231 aa)). Residues 373-435 (MAMVGREVGV…PNSLAGERLG (63 aa)) enclose the TRAM domain.

This sequence belongs to the methylthiotransferase family. MiaB subfamily. In terms of assembly, monomer. It depends on [4Fe-4S] cluster as a cofactor.

It localises to the cytoplasm. The catalysed reaction is N(6)-dimethylallyladenosine(37) in tRNA + (sulfur carrier)-SH + AH2 + 2 S-adenosyl-L-methionine = 2-methylsulfanyl-N(6)-dimethylallyladenosine(37) in tRNA + (sulfur carrier)-H + 5'-deoxyadenosine + L-methionine + A + S-adenosyl-L-homocysteine + 2 H(+). In terms of biological role, catalyzes the methylthiolation of N6-(dimethylallyl)adenosine (i(6)A), leading to the formation of 2-methylthio-N6-(dimethylallyl)adenosine (ms(2)i(6)A) at position 37 in tRNAs that read codons beginning with uridine. This Cereibacter sphaeroides (strain ATCC 17023 / DSM 158 / JCM 6121 / CCUG 31486 / LMG 2827 / NBRC 12203 / NCIMB 8253 / ATH 2.4.1.) (Rhodobacter sphaeroides) protein is tRNA-2-methylthio-N(6)-dimethylallyladenosine synthase.